The following is a 335-amino-acid chain: Capsular polysaccharide phosphotransferase WcwK (335 aa).

It belongs to the stealth family.

This Streptococcus pneumoniae protein is Capsular polysaccharide phosphotransferase WcwK (wcwK).